A 341-amino-acid polypeptide reads, in one-letter code: Major histocompatibility complex class I-related protein 1 (341 aa).

The signal sequence occupies residues 1-18 (MMLLLPLLAVFLVKRSHT). The interval 19–105 (RTHSLRYFRL…RHLQRHYNHS (87 aa)) is alpha-1. The antigen-binding cleft stretch occupies residues 19 to 197 (RTHSLRYFRL…EYGRDTLERT (179 aa)). At 19–296 (RTHSLRYFRL…APRESGDILR (278 aa)) the chain is on the extracellular side. 8-(9H-purin-6-yl)-2-oxa-8-azabicyclo[3.3.1]nona-3,6-diene-4,6-dicarbaldehyde is bound by residues Tyr-25 and Arg-27. 5-(2-oxoethylideneamino)-6-(D-ribitylamino)uracil contacts are provided by Arg-27, Ser-42, and Lys-61. 5-(2-oxopropylideneamino)-6-(D-ribitylamino)uracil is bound by residues Arg-27, Ser-42, and Lys-61. Arg-27, Ser-42, and Lys-61 together coordinate 7-hydroxy-6-methyl-8-(1-D-ribityl)lumazine. The 8-(9H-purin-6-yl)-2-oxa-8-azabicyclo[3.3.1]nona-3,6-diene-4,6-dicarbaldehyde site is built by Lys-61 and His-76. Lys-61 contacts 2-amino-4-oxopteridine-6-carbaldehyde. Pyridoxal is bound at residue Lys-61. Residue Asn-103 is glycosylated (N-linked (GlcNAc...) asparagine). Positions 106-197 (GLHTYQRMIG…EYGRDTLERT (92 aa)) are alpha-2. An 8-(9H-purin-6-yl)-2-oxa-8-azabicyclo[3.3.1]nona-3,6-diene-4,6-dicarbaldehyde-binding site is contributed by Arg-112. 5-(2-oxoethylideneamino)-6-(D-ribitylamino)uracil-binding residues include Arg-112, Tyr-170, and Gln-171. 5-(2-oxopropylideneamino)-6-(D-ribitylamino)uracil is bound by residues Arg-112, Tyr-170, and Gln-171. 7-hydroxy-6-methyl-8-(1-D-ribityl)lumazine is bound by residues Arg-112, Tyr-170, and Gln-171. Intrachain disulfides connect Cys-116–Cys-179 and Cys-218–Cys-274. The segment at 198–289 (EHPVVRTTRK…GRQMVLEAPR (92 aa)) is alpha-3. The region spanning 200 to 301 (PVVRTTRKET…GDILRVSTIS (102 aa)) is the Ig-like C1-type domain. The interval 290–296 (ESGDILR) is connecting peptide. A helical transmembrane segment spans residues 297-317 (VSTISGTTILIIALAGVGVLI). The Cytoplasmic portion of the chain corresponds to 318 to 341 (WRRSQELKEVMYQPTQVNEGSSPS).

Belongs to the MHC class I family. As to quaternary structure, heterotrimer that consists of MR1, B2M and metabolite antigen. Major classes of metabolite ligands presented by MR1 include riboflavin-related antigens, pyrimidines and ribityl lumazines, nucleobase adducts and folate derivatives. Forms reversible covalent Schiff base complexes with microbial pyrimidine-based metabolite, which serves as a molecular switch triggering complete folding, stable association with B2M and translocation of the ternary complex from endoplasmic reticulum to the plasma membrane. Alternatively, forms non-Schiff base complexes with ribityl lumazines. On antigen-presenting cells, the ternary complex interacts with TCR on MR1-restricted CD4- or CD8-positive T cell subsets. Interacts with TAPBP and TAPBPL chaperones in the endoplasmic reticulum. TAPBP associated or not with MHC class I peptide loading complex binds ligand-free MR1 or MR1-B2M complex, providing for stable MR1 pools ready for metabolite antigen processing. TAPBPL interacts with MR1 in a ligand-independent way; this interaction may stabilize MR1 pool and facilitate ligand loading and dissociation. Structurally, MR1-B2M heterodimer adopts a topology similar to classical MHC class I molecules, with alpha-1 and alpha-2 domains of MR1 forming the antigen-binding cleft composed of two alpha-helices resting on a floor of 7-stranded anti-parallel beta-pleated sheet. Post-translationally, N-glycosylated. As to expression, highly expressed thymus. Expressed in liver, kidney, spleen, heart, brain, lung, skeletal muscle and testis.

The protein localises to the cell membrane. It localises to the endoplasmic reticulum membrane. It is found in the golgi apparatus membrane. Its subcellular location is the early endosome membrane. The protein resides in the late endosome membrane. In terms of biological role, antigen-presenting molecule specialized in displaying microbial pyrimidine-based metabolites to alpha-beta T cell receptors (TCR) on innate-type mucosal-associated invariant T (MAIT) cells. In complex with B2M preferentially presents riboflavin-derived metabolites to semi-invariant TRAV1 TCRs on MAIT cells, guiding immune surveillance of the microbial metabolome at mucosal epithelial barriers. Signature pyrimidine-based microbial antigens are generated via non-enzymatic condensation of metabolite intermediates of the riboflavin pathway with by-products arising from other metabolic pathways such as glycolysis. Typical potent antigenic metabolites are 5-(2-oxoethylideneamino)-6-D-ribitylaminouracil (5-OE-RU) and 5-(2-oxopropylideneamino)-6-D-ribitylaminouracil (5-OP-RU), products of condensation of 5-amino-6-D-ribityaminouracil (5-A-RU) with glyoxal or methylglyoxal by-products, respectively. May present microbial antigens to various TRAV1-negative MAIT cell subsets, providing for unique recognition of diverse microbes, including pathogens that do not synthesize riboflavin. Upon antigen recognition, elicits rapid innate-type MAIT cell activation to eliminate pathogenic microbes by directly killing infected cells. During T cell development, drives thymic selection and post-thymic terminal differentiation of MAIT cells in a process dependent on commensal microflora. Acts as an immune sensor of cancer cell metabolome. May present a tumor-specific or -associated metabolite essential for cancer cell survival to a pan-cancer TCR on a non-MAIT CD8-positive T cell clone, triggering T cell-mediated killing of a wide range of cancer cell types. May present tumor-enriched pyridoxal and pyridoxal 5'-phosphate antigens, enabling preferential recognition of cancer cells. Presents nucleobase carbonyl adducts generated during oxidative stress. Captures M3Ade, a nucleobase adduct composed of one adenine modified by a malondialdehyde trimer, for recognition by MR1-restricted T cell clones expressing a polyclonal TCR repertoire. The sequence is that of Major histocompatibility complex class I-related protein 1 from Mus musculus (Mouse).